Consider the following 141-residue polypeptide: Hydroperoxide reductase (141 aa).

It belongs to the OsmC/Ohr family. As to quaternary structure, homodimer.

The protein resides in the cytoplasm. In terms of biological role, reduces organic and inorganic peroxide substrates. Protects the cell against oxidative stress. In Mycoplasma genitalium (strain ATCC 33530 / DSM 19775 / NCTC 10195 / G37) (Mycoplasmoides genitalium), this protein is Hydroperoxide reductase.